We begin with the raw amino-acid sequence, 176 residues long: Transcription termination/antitermination protein NusG (176 aa).

The region spanning 125–149 (GEVVRVVEGPFANFTATVEEYDVEH) is the KOW domain.

This sequence belongs to the NusG family.

Its function is as follows. Participates in transcription elongation, termination and antitermination. In Helicobacter pylori (strain J99 / ATCC 700824) (Campylobacter pylori J99), this protein is Transcription termination/antitermination protein NusG.